The sequence spans 1592 residues: ABC transporter ATP-binding protein/permease VMR1 (1592 aa).

The Vacuolar portion of the chain corresponds to 1 to 33 (MGTDPLIIRNNGSFWEVDDFTRLGRTQLLSYYL). Asn11 carries an N-linked (GlcNAc...) asparagine glycan. A helical transmembrane segment spans residues 34-54 (PLAIIASIGIFALCRSGLSRY). Residues 55 to 74 (VRSAECDLVNEYLFGAQEER) are Cytoplasmic-facing. A helical transmembrane segment spans residues 75–95 (KEDNSIERLLRNSNTQANYVN). At 96–100 (VKKQG) the chain is on the vacuolar side. A helical membrane pass occupies residues 101 to 121 (RILKLRHFDITTIDVKQIDAK). Over 122-131 (NHGGLTFSRP) the chain is Cytoplasmic. Residues 132–152 (STSDHLRKSSEIVLMSLQIIG) form a helical membrane-spanning segment. Topologically, residues 153–170 (LSFLRVTKINIELTNRDV) are vacuolar. Residues 171 to 191 (TTLLLFWLILLSLSILRVYKR) traverse the membrane as a helical segment. The Cytoplasmic portion of the chain corresponds to 192 to 329 (STNLWAICFT…NKHINNLTLA (138 aa)). A helical membrane pass occupies residues 330 to 350 (LFESFKTYLLIGMLWVLVNSI). The region spanning 338-632 (LLIGMLWVLV…LSNMLSFINQ (295 aa)) is the ABC transmembrane type-1 1 domain. Residues 351–379 (VNLLPTILMKRFLEIVDNPNRSSSCMNLA) lie on the Vacuolar side of the membrane. N-linked (GlcNAc...) asparagine glycosylation is present at Asn370. Residues 380–400 (WLYIIGMFICRLTLAICNSQG) traverse the membrane as a helical segment. Over 401-465 (QFVSDKICLR…SFKVSELANY (65 aa)) the chain is Cytoplasmic. A helical membrane pass occupies residues 466–486 (LYVTVQAVIMIIVVVGLLFNF). Residues 487–489 (LGV) lie on the Vacuolar side of the membrane. The chain crosses the membrane as a helical span at residues 490-510 (SAFAGISIILVMFPLNFLLAN). Topologically, residues 511–572 (LLGKFQKQTL…SLLKKSLVWS (62 aa)) are cytoplasmic. Residues 573–593 (VTSFLWFVTPTLVTGVTFAIC) traverse the membrane as a helical segment. The Vacuolar portion of the chain corresponds to 594 to 614 (TFVQHEDLNAPLAFTTLSLFT). A helical transmembrane segment spans residues 615–635 (LLKTPLDQLSNMLSFINQSKV). The Cytoplasmic portion of the chain corresponds to 636–989 (SLKRISDFLR…ALTALFALYI (354 aa)). Residues 664–908 (IEFKNATLTW…GLFKEKYVQL (245 aa)) enclose the ABC transporter 1 domain. 702 to 709 (GSTGSGKS) provides a ligand contact to ATP. The 302-residue stretch at 981 to 1282 (LTALFALYIT…LVRLYSTFEM (302 aa)) folds into the ABC transmembrane type-1 2 domain. A helical membrane pass occupies residues 990-1010 (TAQILFISQSWWIRHWVNDTN). Over 1011–1051 (VRINAPGFAMDTLPLKGMTDSSKNKHNAFYYLTVYFLIGII) the chain is Vacuolar. A helical membrane pass occupies residues 1052–1072 (QAMLGGFKTMMTFLSGMRASR). Residues 1073–1115 (KIFNNLLDLVLHAQIRFFDVTPVGRIMNRFSKDIEGVDQELIP) lie on the Cytoplasmic side of the membrane. The helical transmembrane segment at 1116 to 1136 (YLEVTIFCLIQCASIIFLITV) threads the bilayer. Residue Ile1137 is a topological domain, vacuolar. Residues 1138–1158 (TPRFLTVAVIVFVLYFFVGKW) form a helical membrane-spanning segment. Residues 1159 to 1229 (YLTASRELKR…VTVKWFSFRV (71 aa)) are Cytoplasmic-facing. A helical membrane pass occupies residues 1230-1250 (DMIGAFIVLASGSFILLNIAN). At 1251-1252 (ID) the chain is on the vacuolar side. A helical transmembrane segment spans residues 1253 to 1273 (SGLAGISLTYAILFTDGALWL). Residues 1274-1592 (VRLYSTFEMN…IAKQSSKMMK (319 aa)) lie on the Cytoplasmic side of the membrane. The ABC transporter 2 domain maps to 1323–1572 (IEIENLSLRY…ERGIFYSMCR (250 aa)). An ATP-binding site is contributed by 1357-1364 (GRTGAGKS).

The protein belongs to the ABC transporter superfamily. In terms of assembly, ABC transporter which may be involved in multidrug resistance.

It is found in the vacuole membrane. This chain is ABC transporter ATP-binding protein/permease VMR1 (VMR1), found in Saccharomyces cerevisiae (strain ATCC 204508 / S288c) (Baker's yeast).